We begin with the raw amino-acid sequence, 329 residues long: GTP 3',8-cyclase 1 (329 aa).

The region spanning 7-230 is the Radical SAM core domain; that stretch reads GQGRQIDYLR…LDSAEQSGGP (224 aa). A GTP-binding site is contributed by arginine 16. Residues cysteine 23 and cysteine 27 each coordinate [4Fe-4S] cluster. Position 29 (tyrosine 29) interacts with S-adenosyl-L-methionine. Cysteine 30 contributes to the [4Fe-4S] cluster binding site. Position 65 (arginine 65) interacts with GTP. Residue glycine 69 participates in S-adenosyl-L-methionine binding. Threonine 96 contributes to the GTP binding site. Position 120 (serine 120) interacts with S-adenosyl-L-methionine. Lysine 157 is a binding site for GTP. Methionine 191 is an S-adenosyl-L-methionine binding site. Residues cysteine 255 and cysteine 258 each contribute to the [4Fe-4S] cluster site. 260 to 262 is a binding site for GTP; the sequence is RLR. Residue cysteine 272 participates in [4Fe-4S] cluster binding.

Belongs to the radical SAM superfamily. MoaA family. As to quaternary structure, monomer and homodimer. [4Fe-4S] cluster serves as cofactor.

The enzyme catalyses GTP + AH2 + S-adenosyl-L-methionine = (8S)-3',8-cyclo-7,8-dihydroguanosine 5'-triphosphate + 5'-deoxyadenosine + L-methionine + A + H(+). The protein operates within cofactor biosynthesis; molybdopterin biosynthesis. Catalyzes the cyclization of GTP to (8S)-3',8-cyclo-7,8-dihydroguanosine 5'-triphosphate. The chain is GTP 3',8-cyclase 1 (moaA1) from Pseudomonas aeruginosa (strain ATCC 15692 / DSM 22644 / CIP 104116 / JCM 14847 / LMG 12228 / 1C / PRS 101 / PAO1).